Here is a 250-residue protein sequence, read N- to C-terminus: MSHNFHVIIPARYHSSRFPGKLLQEINGITVIERVYRQALLAEPKSVIIATDHDEIADRAIQFGAEVVITSHTHQTGTDRIAEVIAKGSFAPDDVIVNVQGDEPFIRPKLIQQVACSLTKTKAPVSTLCWPISSLEILNNPNVVKVVCTRDNHALYFSRSAIPFHRDDKNAYSNTFRHIGLYAYRAAFLLEFVSWPPCTLEQIECLEQLRILWSGFSIRVDEACEEPLQDINTKEDLILAQQYFLDTFNV.

The protein belongs to the KdsB family.

Its subcellular location is the cytoplasm. The enzyme catalyses 3-deoxy-alpha-D-manno-oct-2-ulosonate + CTP = CMP-3-deoxy-beta-D-manno-octulosonate + diphosphate. It functions in the pathway nucleotide-sugar biosynthesis; CMP-3-deoxy-D-manno-octulosonate biosynthesis; CMP-3-deoxy-D-manno-octulosonate from 3-deoxy-D-manno-octulosonate and CTP: step 1/1. Its pathway is bacterial outer membrane biogenesis; lipopolysaccharide biosynthesis. In terms of biological role, activates KDO (a required 8-carbon sugar) for incorporation into bacterial lipopolysaccharide in Gram-negative bacteria. The chain is 3-deoxy-manno-octulosonate cytidylyltransferase from Legionella pneumophila subsp. pneumophila (strain Philadelphia 1 / ATCC 33152 / DSM 7513).